The chain runs to 878 residues: MTKFTTEEVRSKFITYFKTNNHTHVPASSLIPQNDPSLMFVNSGMVQFKNVFTGQEKRPYNKAVTSQKSLRAGGKHNDLENVGYTARHHTFFEMLGNFSFGDYFKEQAIYYAWNLLTKKFELPKNKLYVTIYHTDDEAASYWKKIAGFGDDRIIRIKTNDNFWSMGDTGPCGPCSEIFYDHGENIYGGLPGTKDEDGDRFIEILNMVFMQYEQVDKDTRIELPQKSIDTGMGLERMTAILQHVNNNYDIDLFQKIIDYTENIVKVKVKGEAKFSYRVIADHLRASSFLIADGVIPSNEGRGYVLRRIMRRSMRHAHMLGSKEPLMYKLLPKLVDLMGNIYPELKRSESFISNILEQEEIRFKTTLERGLKLLSEETETLTKGDKLSGEIAFKLYDTYGFPLDLTKDILKNYDISVDHQGFKEQMLAQKERARKSWLGSGEYKTNQLWFDIKEQYGSTEFLGYTLNEAECKIIVLIKDNNLVNNIQETDTQFLLISNQTPFYGESGGQMGDNGTIFAKDSEVEVIDTLKYLGSIIVHKCILKKGKIHVGENANFSIDVKYRQNLRIHHSATHILHAVLHEVLGKHVTQKGSLVAPTYLRFDISYSKAVTNEEITLIEDKVNEIIRANHEVNTTLMATEDAVKQGAMALFGEKYDSEVRVVKMGNNSLELCGGTHVRRLGDIGCFKITNESAIAAGIRRIEAVCGEFVIKLMREKENLLKSVESSLKTNKNELITKVNNILERNKGLEKELEKVHLAHLDLSIDQINKEAEEIKGVKLIYQYIENLNNKVLRQAAENLTKKVEDLIVVYIVGNSDKLSITVAVSKAITDKFNAVNIAKELSLFLGGTGGGGQASLAQAGGHDIGKLNKIHEKLYSLLTVL.

Zn(2+)-binding residues include histidine 567, histidine 571, cysteine 669, and histidine 673.

Belongs to the class-II aminoacyl-tRNA synthetase family. Requires Zn(2+) as cofactor.

The protein localises to the cytoplasm. It catalyses the reaction tRNA(Ala) + L-alanine + ATP = L-alanyl-tRNA(Ala) + AMP + diphosphate. Functionally, catalyzes the attachment of alanine to tRNA(Ala) in a two-step reaction: alanine is first activated by ATP to form Ala-AMP and then transferred to the acceptor end of tRNA(Ala). Also edits incorrectly charged Ser-tRNA(Ala) and Gly-tRNA(Ala) via its editing domain. The sequence is that of Alanine--tRNA ligase from Rickettsia canadensis (strain McKiel).